Consider the following 507-residue polypeptide: Transmembrane protein 184 homolog DDB_G0276041 (507 aa).

Helical transmembrane passes span Ile-13 to Leu-33, Ile-50 to Phe-70, Ala-88 to Leu-108, Leu-141 to Leu-161, Leu-179 to Phe-199, Val-222 to Leu-242, and Phe-260 to Ser-280. Residues Asn-360, Asn-375, Asn-470, Asn-473, Asn-477, and Asn-498 are each glycosylated (N-linked (GlcNAc...) asparagine). A disordered region spans residues Asn-448–Ser-500. The segment covering Ser-451 to Ser-500 has biased composition (low complexity).

This sequence belongs to the TMEM184 family.

The protein resides in the cell membrane. Functionally, probable transporter. The protein is Transmembrane protein 184 homolog DDB_G0276041 (tmem184B) of Dictyostelium discoideum (Social amoeba).